The primary structure comprises 351 residues: Formyl peptide receptor 2 (351 aa).

Topologically, residues 1 to 29 are extracellular; it reads MESNYSIHLNGSEVVVYDSTISRVLWILS. N-linked (GlcNAc...) asparagine glycosylation is found at Asn-4 and Asn-10. A helical transmembrane segment spans residues 30 to 50; that stretch reads MVVVSITFFLGVLGNGLVIWV. Topologically, residues 51–61 are cytoplasmic; that stretch reads AGFRMPHTVTT. A helical membrane pass occupies residues 62–82; that stretch reads IWYLNLALADFSFTATLPFLL. Residues 83–99 are Extracellular-facing; sequence VEMAMKEKWPFGWFLCK. A disulfide bond links Cys-98 and Cys-176. A helical membrane pass occupies residues 100–120; the sequence is LVHIVVDVNLFGSVFLIALIA. The Cytoplasmic portion of the chain corresponds to 121–144; sequence LDRCICVLHPVWAQNHRTVSLARK. The helical transmembrane segment at 145 to 165 threads the bilayer; the sequence is VVVGPWIFALILTLPIFIFLT. Over 166–205 the chain is Extracellular; that stretch reads TVRIPGGDVYCTFNFGSWAQTDEEKLNTAITFVTTRGIIR. Residues 206 to 226 traverse the membrane as a helical segment; it reads FLIGFSMPMSIVAVCYGLIAV. Residues 227–241 lie on the Cytoplasmic side of the membrane; sequence KINRRNLVNSSRPLR. Residues 242–262 form a helical membrane-spanning segment; that stretch reads VLTAVVASFFICWFPFQLVAL. At 263 to 282 the chain is on the extracellular side; it reads LGTVWFKETLLSGSYKILDM. Residues 283-305 traverse the membrane as a helical segment; the sequence is FVNPTSSLAYFNSCLNPMLYVFM. Topologically, residues 306-351 are cytoplasmic; sequence GQDFRERFIHSLPYSLERALSEDSGQTSDSSTSSTSPPADIELKAP. Residues 325–351 form a disordered region; sequence LSEDSGQTSDSSTSSTSPPADIELKAP. The segment covering 327–341 has biased composition (low complexity); the sequence is EDSGQTSDSSTSSTS.

Belongs to the G-protein coupled receptor 1 family. In terms of assembly, interacts with Amyloid-beta protein 42, product of APP; the interaction takes place at the cell surface and the complex is then rapidly internalized. In terms of tissue distribution, primarily expressed in neutrophils. Not detected in vomeronasal neurons.

The protein resides in the cell membrane. In terms of biological role, high affinity receptor for N-formyl-methionyl peptides (FMLP), which are powerful neutrophil chemotactic factors. Stimulates chemotaxis in immune cells to site of infection or tissue damage upon recognition of several ligands, such as FMLP, or ligand involved in cell damage, disease or inflammation. Receptor for the chemokine-like protein FAM19A5, mediating FAM19A5-stimulated macrophage chemotaxis and the inhibitory effect on TNFSF11/RANKL-induced osteoclast differentiation. The polypeptide is Formyl peptide receptor 2 (Fpr2) (Mus musculus (Mouse)).